The chain runs to 318 residues: MVSLDPINAKFAAAIDGLPAPHQLGGPGKAFENLEELQRHEPANDIATQVIKVEGKYGPTSVTLFRSKALVDKPLPMIFYTHGGGWVMGSAKSFAVLVEDLARRTGAAVIFPDYTLAPHQTFPFPFEQSYEVLEYMIRHGKEYNLLVKTIALAGDSVGGHMAIAMMQMSLQRQLPATISQIVLWAPVTVTHKKYPSYTTFKDGPFLPEATMDWMIDTFIPSKSDRETALASPLTHLPDDVLSKFPPTIIFLSTVDPLVDEGVAFGQRLQGLGVDASVIKAEGQMHAFCLVTALRDGPTAQAVLELAALRLRKIFPDSA.

Residues Ser156, Asp255, and His285 contribute to the active site.

Belongs to the AB hydrolase 3 family.

Functionally, esterase; part of the Fusarium detoxification of benzoxazolinone cluster 2 (FDB2) involved in the degradation of benzoxazolinones produced by the host plant. Maize, wheat, and rye produce the 2 benzoxazinone phytoanticipins 2,4-dihy-droxy-7-methoxy-1,4-benzoxazin-3-one (DIMBOA) and 2,4-dihydroxy-1,4-benzoxazin-3-one (DIBOA) that, due to their inherent instability once released, spontaneously degrade to the more stable corresponding benzoxazolinones, 6-methoxy-2-benzoxazolinone (MBOA) and 2-benzoxazolinone (BOA), respectively. The first step in the detoxification of benzoxazolinones involves the hydrolysis of the cyclic ester bond of benzoxazolinones by the FDB1 cluster gamma-lactamase MBL1 to aminophenols. MBL1 is able to convert BOA into 2-aminophenol (2-AP), as well as MBOA into 5-methoxy-2-aminophenol (2-AMP). The FDB2 cluster N-malonyltransferase FDB2/NAT1 then metabolizes aminophenols via N-malonylation to non-toxic malonamic acids. FDB2/NAT1 converts 2-AP into N-(2-hydroxyphenyl) malonamic acid (HPMA) and 2-AMP into N-(2-hydroxy-4-methoxyphenyl) malonamic acid (HMPMA). The duplicated dienlactone hydrolases DLH1 and DLH2 may provide redundant function for hydrolyzing the lactone moiety in the BOA molecule. The roles of the amidases an other enzymes encoded by the 2 FDB clusters have not been identified so far. The protein is Esterase FVEG_12639 of Gibberella moniliformis (strain M3125 / FGSC 7600) (Maize ear and stalk rot fungus).